Consider the following 472-residue polypeptide: Trigger factor (472 aa).

The PPIase FKBP-type domain maps to 174–261; sequence GDIALVSFKG…LEDLKIKELP (88 aa). Residues 433–472 are disordered; it reads NNTVVEKPPEKARDQIKEKSSKKKTTKTNKEKKSSKTPKS. Residues 439-451 are compositionally biased toward basic and acidic residues; the sequence is KPPEKARDQIKEK.

The protein belongs to the FKBP-type PPIase family. Tig subfamily.

Its subcellular location is the cytoplasm. It catalyses the reaction [protein]-peptidylproline (omega=180) = [protein]-peptidylproline (omega=0). Its function is as follows. Involved in protein export. Acts as a chaperone by maintaining the newly synthesized protein in an open conformation. Functions as a peptidyl-prolyl cis-trans isomerase. The chain is Trigger factor from Prochlorococcus marinus (strain NATL1A).